A 400-amino-acid chain; its full sequence is Probable phospho-2-dehydro-3-deoxyheptonate aldolase (400 aa).

It belongs to the class-II DAHP synthase family.

The catalysed reaction is D-erythrose 4-phosphate + phosphoenolpyruvate + H2O = 7-phospho-2-dehydro-3-deoxy-D-arabino-heptonate + phosphate. It participates in antibiotic biosynthesis; phenazine biosynthesis. The protein is Probable phospho-2-dehydro-3-deoxyheptonate aldolase (phzC) of Pseudomonas fluorescens.